Consider the following 331-residue polypeptide: Laforin (331 aa).

Positions 1–124 (MRFRFGVVVP…NNLVDGVYCL (124 aa)) constitute a CBM20 domain. Position 25 is a phosphoserine; by AMPK (Ser-25). Substrate is bound by residues Trp-32, Lys-87, 103-107 (GPHHD), Asp-197, Asp-235, and Arg-241. Positions 156-323 (HYSRILPNIW…EEDFFQKFGK (168 aa)) constitute a Tyrosine-protein phosphatase domain. The Phosphocysteine intermediate role is filled by Cys-266. The short motif at 266 to 272 (CNAGVGR) is the Glucan phosphatase signature motif CXAGXGR element. Residues 267 to 272 (NAGVGR) and Tyr-304 contribute to the substrate site.

This sequence belongs to the protein-tyrosine phosphatase family. Homodimer. Interacts with itself. Interacts with PPP1R3B, PPP1R3C, PPP1R3D, HIRIP5, and EPM2AIP1. Binds glycogen and Lafora bodies. Interacts with NHLRC1/malin (via the NHL repeats). Forms a complex with NHLRC1/malin and HSP70. Interacts with PPP1R3D; in the presence of NHLC1/malin the interaction leads to ubiquitination and autophagic degradation of PPP1R3D. Interacts (via the phosphatase domain) with MAPT/Tau; the interaction dephosphorylates MAPT. Interacts with PRDM8. Post-translationally, polyubiquitinated by NHLRC1/malin. Phosphorylation on Ser-25 by AMPK affects the phosphatase activity of the enzyme and its ability to homodimerize and interact with NHLRC1, PPP1R3C or PRKAA2.

It localises to the cytoplasm. The protein resides in the endoplasmic reticulum membrane. The protein localises to the cell membrane. The enzyme catalyses O-phospho-L-tyrosyl-[protein] + H2O = L-tyrosyl-[protein] + phosphate. The catalysed reaction is O-phospho-L-seryl-[protein] + H2O = L-seryl-[protein] + phosphate. It carries out the reaction O-phospho-L-threonyl-[protein] + H2O = L-threonyl-[protein] + phosphate. In terms of biological role, plays an important role in preventing glycogen hyperphosphorylation and the formation of insoluble aggregates, via its activity as glycogen phosphatase, and by promoting the ubiquitination of proteins involved in glycogen metabolism via its interaction with the E3 ubiquitin ligase NHLRC1/malin. Dephosphorylates phosphotyrosine and synthetic substrates, such as para-nitrophenylphosphate (pNPP), and has low activity with phosphoserine and phosphothreonine substrates (in vitro). Has also been shown to dephosphorylate MAPT. Shows strong phosphatase activity towards complex carbohydrates in vitro, avoiding glycogen hyperphosphorylation which is associated with reduced branching and formation of insoluble aggregates. Forms a complex with NHLRC1/malin and HSP70, which suppresses the cellular toxicity of misfolded proteins by promoting their degradation through the ubiquitin-proteasome system (UPS). Acts as a scaffold protein to facilitate PPP1R3C/PTG ubiquitination by NHLRC1/malin. Also promotes proteasome-independent protein degradation through the macroautophagy pathway. This chain is Laforin (EPM2A), found in Canis lupus familiaris (Dog).